Reading from the N-terminus, the 144-residue chain is D-aminoacyl-tRNA deacylase (144 aa).

The short motif at 136–137 (GP) is the Gly-cisPro motif, important for rejection of L-amino acids element.

The protein belongs to the DTD family. In terms of assembly, homodimer.

Its subcellular location is the cytoplasm. The enzyme catalyses glycyl-tRNA(Ala) + H2O = tRNA(Ala) + glycine + H(+). It carries out the reaction a D-aminoacyl-tRNA + H2O = a tRNA + a D-alpha-amino acid + H(+). In terms of biological role, an aminoacyl-tRNA editing enzyme that deacylates mischarged D-aminoacyl-tRNAs. Also deacylates mischarged glycyl-tRNA(Ala), protecting cells against glycine mischarging by AlaRS. Acts via tRNA-based rather than protein-based catalysis; rejects L-amino acids rather than detecting D-amino acids in the active site. By recycling D-aminoacyl-tRNA to D-amino acids and free tRNA molecules, this enzyme counteracts the toxicity associated with the formation of D-aminoacyl-tRNA entities in vivo and helps enforce protein L-homochirality. This is D-aminoacyl-tRNA deacylase from Haemophilus influenzae (strain ATCC 51907 / DSM 11121 / KW20 / Rd).